A 208-amino-acid polypeptide reads, in one-letter code: Phosphoheptose isomerase (208 aa).

Positions 38-200 (MAVTLAKGHK…LFENVLALQP (163 aa)) constitute an SIS domain. Substrate is bound at residue 53 to 55 (NGG). Residues histidine 62 and glutamate 66 each coordinate Zn(2+). Substrate-binding positions include glutamate 66, 95–96 (ND), 121–123 (STS), serine 126, and glutamine 173. Residues glutamine 173 and histidine 181 each coordinate Zn(2+).

Belongs to the SIS family. GmhA subfamily. Homotetramer. Zn(2+) serves as cofactor.

It localises to the cytoplasm. It catalyses the reaction 2 D-sedoheptulose 7-phosphate = D-glycero-alpha-D-manno-heptose 7-phosphate + D-glycero-beta-D-manno-heptose 7-phosphate. Its pathway is carbohydrate biosynthesis; D-glycero-D-manno-heptose 7-phosphate biosynthesis; D-glycero-alpha-D-manno-heptose 7-phosphate and D-glycero-beta-D-manno-heptose 7-phosphate from sedoheptulose 7-phosphate: step 1/1. Functionally, catalyzes the isomerization of sedoheptulose 7-phosphate in D-glycero-D-manno-heptose 7-phosphate. The chain is Phosphoheptose isomerase from Nitratidesulfovibrio vulgaris (strain ATCC 29579 / DSM 644 / CCUG 34227 / NCIMB 8303 / VKM B-1760 / Hildenborough) (Desulfovibrio vulgaris).